A 150-amino-acid polypeptide reads, in one-letter code: Actin-depolymerizing factor 3 (150 aa).

Residues 7 to 150 (GVAVSEECKA…TLDVLKDHTS (144 aa)) enclose the ADF-H domain.

Belongs to the actin-binding proteins ADF family.

Functionally, actin-depolymerizing protein. Severs actin filaments (F-actin) and binds to actin monomers. This Oryza sativa subsp. japonica (Rice) protein is Actin-depolymerizing factor 3 (ADF3).